Consider the following 385-residue polypeptide: MVHQSEMENYNIGQASIEEVSDPAYKGAKIVVIGVGGGGSNMIKHLVEYGVHQDVTPIATNTDGQHLKNNPAPVKILLGKESTGGLGAGGIPDIGRKAAEESANEIKEAIKDAKLVIISTGLGGGTGTGATPTIVKIAKEVGALTIAIVTKPFKYEGNQKRKRAEEGLKELEQSSDSILVIPNDKILLTMKKNASTTECYREVDDVLVRAVSGISTIITKPGNINVDFADLKSALGFKGFALMGIGEATGEESAKLAVQNAIQSPLLDDASIEGAKSIIVFFEHHPDYPMMAYSQACDFIQDQAHQDVDVKFGQHTSDNIPIDHVRVTIIATGAERNSGGASLESIATPSQPVVKQTRKVGNGEYLKIPTEEELSIPTTMRIQQD.

GTP-binding positions include 37 to 41 (GGGSN), 125 to 127 (GTG), E156, K160, and D204.

The protein belongs to the FtsZ family. Homodimer. Polymerizes to form a dynamic ring structure in a strictly GTP-dependent manner. Interacts directly with several other division proteins.

The protein resides in the cytoplasm. In terms of biological role, essential cell division protein that forms a contractile ring structure (Z ring) at the future cell division site. The regulation of the ring assembly controls the timing and the location of cell division. One of the functions of the FtsZ ring is to recruit other cell division proteins to the septum to produce a new cell wall between the dividing cells. Binds GTP and shows GTPase activity. The polypeptide is Cell division protein FtsZ (Helicobacter pylori (strain ATCC 700392 / 26695) (Campylobacter pylori)).